The sequence spans 353 residues: Photosystem II protein D1 (353 aa).

Position 2 is an N-acetylthreonine (Thr-2). At Thr-2 the chain carries Phosphothreonine. 3 helical membrane passes run 29 to 46 (YIGW…TATS), 118 to 133 (HFLL…EWEL), and 142 to 156 (WIAV…AATA). His-118 contacts chlorophyll a. Tyr-126 contacts pheophytin a. 2 residues coordinate [CaMn4O5] cluster: Asp-170 and Glu-189. Residues 197 to 218 (FHMLGVAGVFGGSLFSAMHGSL) traverse the membrane as a helical segment. Residue His-198 participates in chlorophyll a binding. A quinone-binding positions include His-215 and 264–265 (SF). His-215 lines the Fe cation pocket. Fe cation is bound at residue His-272. A helical membrane pass occupies residues 274-288 (FLAAWPVVGIWFTAL). Residues His-332, Glu-333, Asp-342, and Ala-344 each contribute to the [CaMn4O5] cluster site. Positions 345–353 (AIEAPSTNG) are excised as a propeptide.

The protein belongs to the reaction center PufL/M/PsbA/D family. PSII is composed of 1 copy each of membrane proteins PsbA, PsbB, PsbC, PsbD, PsbE, PsbF, PsbH, PsbI, PsbJ, PsbK, PsbL, PsbM, PsbT, PsbX, PsbY, PsbZ, Psb30/Ycf12, at least 3 peripheral proteins of the oxygen-evolving complex and a large number of cofactors. It forms dimeric complexes. Requires The D1/D2 heterodimer binds P680, chlorophylls that are the primary electron donor of PSII, and subsequent electron acceptors. It shares a non-heme iron and each subunit binds pheophytin, quinone, additional chlorophylls, carotenoids and lipids. D1 provides most of the ligands for the Mn4-Ca-O5 cluster of the oxygen-evolving complex (OEC). There is also a Cl(-1) ion associated with D1 and D2, which is required for oxygen evolution. The PSII complex binds additional chlorophylls, carotenoids and specific lipids. as cofactor. Tyr-161 forms a radical intermediate that is referred to as redox-active TyrZ, YZ or Y-Z. Post-translationally, C-terminally processed by CTPA; processing is essential to allow assembly of the oxygen-evolving complex and thus photosynthetic growth.

Its subcellular location is the plastid. It is found in the chloroplast thylakoid membrane. It catalyses the reaction 2 a plastoquinone + 4 hnu + 2 H2O = 2 a plastoquinol + O2. In terms of biological role, photosystem II (PSII) is a light-driven water:plastoquinone oxidoreductase that uses light energy to abstract electrons from H(2)O, generating O(2) and a proton gradient subsequently used for ATP formation. It consists of a core antenna complex that captures photons, and an electron transfer chain that converts photonic excitation into a charge separation. The D1/D2 (PsbA/PsbD) reaction center heterodimer binds P680, the primary electron donor of PSII as well as several subsequent electron acceptors. The polypeptide is Photosystem II protein D1 (Petunia hybrida (Petunia)).